A 960-amino-acid polypeptide reads, in one-letter code: RNA polymerase II subunit A C-terminal domain phosphatase (960 aa).

M1 is subject to N-acetylmethionine. The FCP1 homology domain occupies 178-341 (HRNRKLVLMV…PPAARETQAR (164 aa)). The tract at residues 331 to 580 (APPAARETQA…EEDTDDDDHL (250 aa)) is disordered. Positions 439–448 (PGVQPTQGDA) are enriched in polar residues. The span at 453 to 463 (LDFDLSSDSES) shows a compositional bias: acidic residues. S530 bears the Phosphoserine mark. Polar residues predominate over residues 547 to 556 (ESQNSEQSGV). Residues 566-578 (VGEEEEEDTDDDD) are compositionally biased toward acidic residues. The BRCT domain occupies 619-718 (LKSKVLADVA…DKVEEQLFPL (100 aa)). Phosphoserine is present on residues S664 and S730. K770 bears the N6-acetyllysine mark. 2 disordered regions span residues 770 to 834 (KLIR…MSEA) and 854 to 948 (DILG…ADEM). S830, S860, and S863 each carry phosphoserine. The segment covering 854 to 864 (DILGEGSDDSD) has biased composition (acidic residues). Over residues 865–881 (IEKKKPEDQDNEQERAP) the composition is skewed to basic and acidic residues. Acidic residues predominate over residues 934–947 (SNDDEEGSSSEADE).

As to quaternary structure, homodimer. Interacts with GTF2F1. Interacts with WDR77, SNRPB and SNRNP70. In terms of processing, phosphorylated. In the presence of TFIIF, the phosphorylated form has an increased CTD phosphatase activity. The phosphorylation is required for the physical interaction with GTF2F1.

It is found in the nucleus. It localises to the cytoplasm. Its subcellular location is the cytoskeleton. The protein localises to the microtubule organizing center. The protein resides in the centrosome. It is found in the spindle. It localises to the spindle pole. Its subcellular location is the midbody. The enzyme catalyses O-phospho-L-seryl-[protein] + H2O = L-seryl-[protein] + phosphate. The catalysed reaction is O-phospho-L-threonyl-[protein] + H2O = L-threonyl-[protein] + phosphate. In terms of biological role, processively dephosphorylates 'Ser-2' and 'Ser-5' of the heptad repeats YSPTSPS in the C-terminal domain of the largest RNA polymerase II subunit. This promotes the activity of RNA polymerase II. Plays a role in the exit from mitosis by dephosphorylating crucial mitotic substrates (USP44, CDC20 and WEE1) that are required for M-phase-promoting factor (MPF)/CDK1 inactivation. The protein is RNA polymerase II subunit A C-terminal domain phosphatase (Ctdp1) of Mus musculus (Mouse).